Here is a 330-residue protein sequence, read N- to C-terminus: T-cell leukemia homeobox protein 1 (330 aa).

Residues 186-207 (DRFTGHPYQNRTPPKKKKPRTS) form a disordered region. Positions 201 to 260 (KKKPRTSFTRLQICELEKRFHRQKYLASAERAALAKALKMTDAQVKTWFQNRRTKWRRQT) form a DNA-binding region, homeobox. At Lys-236 the chain carries N6-acetyllysine.

In terms of assembly, interacts with MEIS1, MEIS2, PBX1, PBX2 and PBX3.

It localises to the nucleus. Its function is as follows. Controls the genesis of the spleen. Binds to the DNA sequence 5'-GGCGGTAAGTGG-3'. The protein is T-cell leukemia homeobox protein 1 (TLX1) of Homo sapiens (Human).